The primary structure comprises 508 residues: MKLQLAAVATLAVLTSPAFGRVLPDGKYVKIPFTKKKNGDNGELSKRSNGHEKFVLANEQSFYSVELAIGTPSQNLTVLLDTGSADLWVPGKGNPYCGSVMDCDQYGVFDKTKSSTFKANKSSPFYAAYGDGTYAEGAFGQDKLKYNELDLSGLSFAVANESNSTFGVLGIGLSTLEVTYSGKVAIMDKRSYEYDNFPLFLKHSGAIDATAYSLFLNDESQSSGSILFGAVDHSKYEGQLYTIPLVNLYKSQGYQHPVAFDVTLQGLGLQTDKRNITLTTTKLPALLDSGTTLTYLPSQAVALLAKSLNASYSKTLGYYEYTCPSSDNKTSVAFDFGGFRINAPLSDFTMQTSVGTCVLAIIPQAGNATAILGDSFLRNAYVVYDLDNYEISLAQAKYGTGKENVEVIKSTVPSAIRAPSYNNTWSNYASATSGGNIFTTVRTFNGTSTATTTRSTTTKKTNSTTTAKSTHKSKRALQRAATNSASSIRSTLGLLLVPSLLILSVFFS.

The signal sequence occupies residues 1–20; that stretch reads MKLQLAAVATLAVLTSPAFG. Positions 21–47 are excised as a propeptide; that stretch reads RVLPDGKYVKIPFTKKKNGDNGELSKR. In terms of domain architecture, Peptidase A1 spans 63-394; sequence YSVELAIGTP…DLDNYEISLA (332 aa). N-linked (GlcNAc...) asparagine glycosylation is present at Asn-75. Asp-81 is an active-site residue. N-linked (GlcNAc...) asparagine glycosylation is found at Asn-120, Asn-160, Asn-163, and Asn-275. Asp-288 is a catalytic residue. N-linked (GlcNAc...) asparagine glycosylation is found at Asn-309, Asn-328, Asn-367, Asn-422, Asn-445, and Asn-462. The span at 448–468 shows a compositional bias: low complexity; the sequence is STATTTRSTTTKKTNSTTTAK. The segment at 448–476 is disordered; that stretch reads STATTTRSTTTKKTNSTTTAKSTHKSKRA. Residue Asn-483 is the site of GPI-anchor amidated asparagine attachment. Positions 484-508 are cleaved as a propeptide — removed in mature form; it reads SASSIRSTLGLLLVPSLLILSVFFS.

Belongs to the peptidase A1 family. Post-translationally, can also be processed to start at Phe-54.

It localises to the cell membrane. Functionally, cleaves proteins C-terminally to mono- and paired-basic residues. Required for cell wall integrity. The protein is Aspartic proteinase yapsin-3 (YPS3) of Saccharomyces cerevisiae (strain ATCC 204508 / S288c) (Baker's yeast).